The chain runs to 460 residues: Flavonol 3-O-glucosyltransferase (460 aa).

Residue H23 is the Proton acceptor of the active site. H23 and Q88 together coordinate an anthocyanidin. The active-site Charge relay is the D123. T145 provides a ligand contact to UDP-alpha-D-glucose. H154 is an an anthocyanidin binding site. The UDP-alpha-D-glucose site is built by A339, Q341, H356, W359, N360, S361, and E364. G379 is a binding site for an anthocyanidin. D380 and Q381 together coordinate UDP-alpha-D-glucose.

It belongs to the UDP-glycosyltransferase family.

It carries out the reaction a flavonol + UDP-alpha-D-glucose = a flavonol 3-O-beta-D-glucoside + UDP + H(+). The catalysed reaction is quercetin + UDP-alpha-D-glucose = quercetin 3-O-beta-D-glucoside + UDP + H(+). It participates in flavonoid metabolism. Functionally, flavonol 3-O-glucosyltransferase that catalyzes the transfer of glucose from UDP-glucose to the 3-OH position of quercetin and kaempferol. Possesses high quercetin 3-O-glucosyltransferase activity in vitro. Catalyzes the glycosylation of anthocyanins from UDP-glucose. Also active in vitro on benzoates and benzoate derivatives. This Arabidopsis thaliana (Mouse-ear cress) protein is Flavonol 3-O-glucosyltransferase.